Consider the following 164-residue polypeptide: Nucleotide-binding protein EF_1165 (164 aa).

The protein belongs to the YajQ family.

In terms of biological role, nucleotide-binding protein. The sequence is that of Nucleotide-binding protein EF_1165 from Enterococcus faecalis (strain ATCC 700802 / V583).